Consider the following 182-residue polypeptide: ATP synthase subunit delta, organellar chromatophore (182 aa).

The protein belongs to the ATPase delta chain family. As to quaternary structure, F-type ATPases have 2 components, F(1) - the catalytic core - and F(0) - the membrane proton channel. F(1) has five subunits: alpha(3), beta(3), gamma(1), delta(1), epsilon(1). CF(0) has four main subunits: a(1), b(1), b'(1) and c(10-14). The alpha and beta chains form an alternating ring which encloses part of the gamma chain. F(1) is attached to F(0) by a central stalk formed by the gamma and epsilon chains, while a peripheral stalk is formed by the delta, b and b' chains.

It localises to the plastid. Its subcellular location is the organellar chromatophore thylakoid membrane. Functionally, f(1)F(0) ATP synthase produces ATP from ADP in the presence of a proton or sodium gradient. F-type ATPases consist of two structural domains, F(1) containing the extramembraneous catalytic core and F(0) containing the membrane proton channel, linked together by a central stalk and a peripheral stalk. During catalysis, ATP synthesis in the catalytic domain of F(1) is coupled via a rotary mechanism of the central stalk subunits to proton translocation. Its function is as follows. This protein is part of the stalk that links CF(0) to CF(1). It either transmits conformational changes from CF(0) to CF(1) or is implicated in proton conduction. The sequence is that of ATP synthase subunit delta, organellar chromatophore from Paulinella chromatophora.